The chain runs to 168 residues: Ribosome-binding factor A (168 aa).

Over residues 122–136 (VRRDARPAGDDDPYR) the composition is skewed to basic and acidic residues. The tract at residues 122–168 (VRRDARPAGDDDPYRRPRPAAGEVDELSEVDELSEVDEYGGTARQEG) is disordered. Acidic residues predominate over residues 144-159 (EVDELSEVDELSEVDE).

This sequence belongs to the RbfA family. As to quaternary structure, monomer. Binds 30S ribosomal subunits, but not 50S ribosomal subunits or 70S ribosomes.

The protein resides in the cytoplasm. One of several proteins that assist in the late maturation steps of the functional core of the 30S ribosomal subunit. Associates with free 30S ribosomal subunits (but not with 30S subunits that are part of 70S ribosomes or polysomes). Required for efficient processing of 16S rRNA. May interact with the 5'-terminal helix region of 16S rRNA. The chain is Ribosome-binding factor A from Frankia casuarinae (strain DSM 45818 / CECT 9043 / HFP020203 / CcI3).